The sequence spans 329 residues: GTP 3',8-cyclase (329 aa).

Residues 8 to 234 form the Radical SAM core domain; the sequence is AFARKFYYLR…QLRQRSDGPA (227 aa). Arginine 17 is a GTP binding site. 2 residues coordinate [4Fe-4S] cluster: cysteine 24 and cysteine 28. Residue tyrosine 30 coordinates S-adenosyl-L-methionine. Cysteine 31 provides a ligand contact to [4Fe-4S] cluster. Arginine 68 contributes to the GTP binding site. Glycine 72 contacts S-adenosyl-L-methionine. Threonine 99 lines the GTP pocket. Serine 123 is an S-adenosyl-L-methionine binding site. A GTP-binding site is contributed by lysine 160. Methionine 194 contributes to the S-adenosyl-L-methionine binding site. 2 residues coordinate [4Fe-4S] cluster: cysteine 257 and cysteine 260. GTP is bound at residue 262-264; it reads RLR. Cysteine 274 contributes to the [4Fe-4S] cluster binding site.

It belongs to the radical SAM superfamily. MoaA family. In terms of assembly, monomer and homodimer. [4Fe-4S] cluster serves as cofactor.

The catalysed reaction is GTP + AH2 + S-adenosyl-L-methionine = (8S)-3',8-cyclo-7,8-dihydroguanosine 5'-triphosphate + 5'-deoxyadenosine + L-methionine + A + H(+). The protein operates within cofactor biosynthesis; molybdopterin biosynthesis. Functionally, catalyzes the cyclization of GTP to (8S)-3',8-cyclo-7,8-dihydroguanosine 5'-triphosphate. This is GTP 3',8-cyclase from Shigella dysenteriae serotype 1 (strain Sd197).